Consider the following 258-residue polypeptide: Imidazole glycerol phosphate synthase subunit HisF (258 aa).

Catalysis depends on residues D11 and D130.

Belongs to the HisA/HisF family. As to quaternary structure, heterodimer of HisH and HisF.

The protein resides in the cytoplasm. It catalyses the reaction 5-[(5-phospho-1-deoxy-D-ribulos-1-ylimino)methylamino]-1-(5-phospho-beta-D-ribosyl)imidazole-4-carboxamide + L-glutamine = D-erythro-1-(imidazol-4-yl)glycerol 3-phosphate + 5-amino-1-(5-phospho-beta-D-ribosyl)imidazole-4-carboxamide + L-glutamate + H(+). Its pathway is amino-acid biosynthesis; L-histidine biosynthesis; L-histidine from 5-phospho-alpha-D-ribose 1-diphosphate: step 5/9. IGPS catalyzes the conversion of PRFAR and glutamine to IGP, AICAR and glutamate. The HisF subunit catalyzes the cyclization activity that produces IGP and AICAR from PRFAR using the ammonia provided by the HisH subunit. This chain is Imidazole glycerol phosphate synthase subunit HisF, found in Xanthomonas euvesicatoria pv. vesicatoria (strain 85-10) (Xanthomonas campestris pv. vesicatoria).